Reading from the N-terminus, the 400-residue chain is Acetate kinase (400 aa).

Asparagine 8 provides a ligand contact to Mg(2+). ATP is bound at residue lysine 15. Arginine 89 serves as a coordination point for substrate. The active-site Proton donor/acceptor is aspartate 146. Residues histidine 206–glycine 210, aspartate 283–arginine 285, and glycine 331–asparagine 335 each bind ATP. Glutamate 383 is a Mg(2+) binding site.

The protein belongs to the acetokinase family. Homodimer. It depends on Mg(2+) as a cofactor. Mn(2+) serves as cofactor.

The protein localises to the cytoplasm. It catalyses the reaction acetate + ATP = acetyl phosphate + ADP. It participates in metabolic intermediate biosynthesis; acetyl-CoA biosynthesis; acetyl-CoA from acetate: step 1/2. Functionally, catalyzes the formation of acetyl phosphate from acetate and ATP. Can also catalyze the reverse reaction. The chain is Acetate kinase from Streptococcus equi subsp. zooepidemicus (strain MGCS10565).